Reading from the N-terminus, the 1528-residue chain is Intraflagellar transport protein 121 (1528 aa).

WD repeat units lie at residues 123-170 (SNRA…GSAP), 244-285 (SSMP…SSVS), 619-667 (PSLT…SEFL), and 759-798 (PELIGIWGLVFSPEDPNLVAVSSQYKVIVFHLDTQTREDS). Residues 914 to 933 (DSGLDVTASNSSQPSTQTSQ) are disordered. The span at 920–933 (TASNSSQPSTQTSQ) shows a compositional bias: low complexity.

Its subcellular location is the cell projection. The protein resides in the cilium. The protein localises to the flagellum. It is found in the cytoplasm. It localises to the cytoskeleton. Its subcellular location is the flagellum axoneme. The protein resides in the flagellum basal body. In terms of biological role, component of the intraflagellar transport complex A (IFT-A) involved in flagellar assembly. This Giardia intestinalis (strain ATCC 50803 / WB clone C6) (Giardia lamblia) protein is Intraflagellar transport protein 121.